Consider the following 366-residue polypeptide: UDP-GlcNAc:ribostamycin N-acetylglucosaminyltransferase (366 aa).

Residues Ala-342 to Gly-352 show a composition bias toward low complexity. Positions Ala-342–Gly-366 are disordered. Positions Arg-357–Gly-366 are enriched in basic and acidic residues.

The protein belongs to the glycosyltransferase group 1 family. Glycosyltransferase 4 subfamily. A divalent metal cation serves as cofactor.

It catalyses the reaction ribostamycin + UDP-N-acetyl-alpha-D-glucosamine = 2'''-acetyl-6'''-hydroxyneomycin C + UDP + H(+). The protein operates within antibiotic biosynthesis; neomycin biosynthesis. In terms of biological role, glycosyltransferase involved in the biosynthesis of neomycin by mediating glycosylation of ribostamycin with UDP-GlcNAc as a sugar donor to generate 2'''-acetyl-6'''-hydroxyneomycin C. In Streptomyces fradiae (Streptomyces roseoflavus), this protein is UDP-GlcNAc:ribostamycin N-acetylglucosaminyltransferase (neoK).